We begin with the raw amino-acid sequence, 391 residues long: 3-ketoacyl-CoA thiolase (391 aa).

Residue Cys95 is the Acyl-thioester intermediate of the active site. Active-site proton acceptor residues include His347 and Cys377.

The protein belongs to the thiolase-like superfamily. Thiolase family. Heterotetramer of two alpha chains (FadB) and two beta chains (FadA).

The protein resides in the cytoplasm. The enzyme catalyses an acyl-CoA + acetyl-CoA = a 3-oxoacyl-CoA + CoA. It participates in lipid metabolism; fatty acid beta-oxidation. Its function is as follows. Catalyzes the final step of fatty acid oxidation in which acetyl-CoA is released and the CoA ester of a fatty acid two carbons shorter is formed. The chain is 3-ketoacyl-CoA thiolase from Pseudomonas aeruginosa (strain ATCC 15692 / DSM 22644 / CIP 104116 / JCM 14847 / LMG 12228 / 1C / PRS 101 / PAO1).